A 504-amino-acid polypeptide reads, in one-letter code: CDK5 regulatory subunit-associated protein 3 (504 aa).

3 consecutive short sequence motifs (shuffled ATG8-binding motif) follow at residues 266-269 (IDWG), 290-293 (IDWG), and 308-311 (IDWG). A required for interaction with UFL1 and mediates interaction with CHEK1 region spans residues 268 to 504 (WGDFGLEAVS…RPVNLMGTSV (237 aa)). Residues 353–368 (DELMELEIFLSQRAVE) are RPL10a-binding domain (RBD). Lysine 448 participates in a covalent cross-link: Glycyl lysine isopeptide (Lys-Gly) (interchain with G-Cter in SUMO2).

It belongs to the CDK5RAP3 family. Substrate adapter component of the UFM1 ribosome E3 ligase (UREL) complex, composed of UFL1, DDRGK1 and CDK5RAP3. Interaction with UFL1 anchors CDK5RAP3 in the cytoplasm, preventing its translocation to the nucleus which allows expression of the CCND1 cyclin and progression of cells through the G1/S transition. Interacts with ATG8 family proteins MAP1LC3A, MAP1LC3B, GABARAP, GABARAPL1 and GABARAPL2. Interacts with CDK5R1; competes with CDK5RAP1 and CDK5RAP2. Interacts with RELA. Interacts with CHEK1; may negatively regulate CHEK1 and thereby stimulate entry into mitosis. Interacts with CDKN2A/ARF and MDM2; forms a ternary complex involved in regulation of p53/TP53. Interacts with MAPK14. Interacts with CCNB1. Interacts with TUBG1; may regulate CDK5RAP3 in mitotic G2/M transition checkpoint. Post-translationally, may be phosphorylated by CDK5. In terms of processing, ubiquitinated. Probably triggers proteasomal degradation and is negatively regulated by UFL1. May be ufmylated. Post-translationally, cleaved by caspases early during apoptosis, the resulting peptides may play a role in rupture of the nuclear envelope. Expressed in vascular endothelium. Up-regulated in failing heart. Highly expressed in the ventricular section in subacute and chronic ischemic heart failure.

It localises to the endoplasmic reticulum membrane. The protein resides in the cytoplasm. Its subcellular location is the nucleus. It is found in the cytoskeleton. The protein localises to the microtubule organizing center. It localises to the centrosome. Substrate adapter of E3 ligase complexes mediating ufmylation, the covalent attachment of the ubiquitin-like modifier UFM1 to substrate proteins, and which is involved in various processes, such as ribosome recycling and reticulophagy (also called ER-phagy). As part of the UREL complex, plays a key role in ribosome recycling by promoting mono-ufmylation of RPL26/uL24 subunit of the 60S ribosome. Ufmylation of RPL26/uL24 occurs on free 60S ribosomes following ribosome dissociation: it weakens the junction between post-termination 60S subunits and SEC61 translocons, promoting release and recycling of the large ribosomal subunit from the endoplasmic reticulum membrane. Ufmylation of RPL26/uL24 and subsequent 60S ribosome recycling either take place after normal termination of translation or after ribosome stalling during cotranslational translocation at the endoplasmic reticulum. Within the UREL complex, CDK5RAP3 acts as a substrate adapter that constrains UFL1 ligase activity to mono-ufmylate RPL26/uL24 at 'Lys-134'. The UREL complex is also involved in reticulophagy in response to endoplasmic reticulum stress by promoting ufmylation of proteins such as CYB5R3, thereby promoting lysosomal degradation of ufmylated proteins. Also acts as a regulator of transcription: negatively regulates NF-kappa-B-mediated gene transcription through the control of RELA phosphorylation. Also regulates mitotic G2/M transition checkpoint and mitotic G2 DNA damage checkpoint. Through its interaction with CDKN2A/ARF and MDM2 may induce MDM2-dependent p53/TP53 ubiquitination, stabilization and activation in the nucleus, thereby promoting G1 cell cycle arrest and inhibition of cell proliferation. May also play a role in the rupture of the nuclear envelope during apoptosis. May regulate MAPK14 activity by regulating its dephosphorylation by PPM1D/WIP1. Required for liver development. The chain is CDK5 regulatory subunit-associated protein 3 from Rattus norvegicus (Rat).